We begin with the raw amino-acid sequence, 199 residues long: Superoxide dismutase [Mn/Fe] 2 (199 aa).

Positions 27, 81, 161, and 165 each coordinate Fe(3+). Mn(2+) is bound by residues His27, His81, Asp161, and His165.

This sequence belongs to the iron/manganese superoxide dismutase family. As to quaternary structure, homodimer. Can also form a heterodimer with SodA. Mn(2+) serves as cofactor. It depends on Fe(3+) as a cofactor.

It carries out the reaction 2 superoxide + 2 H(+) = H2O2 + O2. In terms of biological role, destroys superoxide anion radicals which are normally produced within the cells and which are toxic to biological systems. Catalyzes the dismutation of superoxide anion radicals into O2 and H2O2 by successive reduction and oxidation of the transition metal ion at the active site. This is Superoxide dismutase [Mn/Fe] 2 (sodM) from Staphylococcus aureus (strain bovine RF122 / ET3-1).